The chain runs to 330 residues: Aspartate--ammonia ligase (330 aa).

It belongs to the class-II aminoacyl-tRNA synthetase family. AsnA subfamily. As to quaternary structure, homodimer.

The protein resides in the cytoplasm. It carries out the reaction L-aspartate + NH4(+) + ATP = L-asparagine + AMP + diphosphate + H(+). The protein operates within amino-acid biosynthesis; L-asparagine biosynthesis; L-asparagine from L-aspartate (ammonia route): step 1/1. The chain is Aspartate--ammonia ligase from Salmonella typhi.